The primary structure comprises 151 residues: Lipoprotein signal peptidase (151 aa).

Helical transmembrane passes span 3–23, 59–79, and 85–107; these read LYII…GWIV, WFFY…FYTS, and LYRI…RLHL. Active-site residues include Asp112 and Asp128. The chain crosses the membrane as a helical span at residues 123–143; that stretch reads IFNVADTALTCGVICVFIAIL.

It belongs to the peptidase A8 family.

The protein localises to the cell membrane. The catalysed reaction is Release of signal peptides from bacterial membrane prolipoproteins. Hydrolyzes -Xaa-Yaa-Zaa-|-(S,diacylglyceryl)Cys-, in which Xaa is hydrophobic (preferably Leu), and Yaa (Ala or Ser) and Zaa (Gly or Ala) have small, neutral side chains.. It functions in the pathway protein modification; lipoprotein biosynthesis (signal peptide cleavage). Its function is as follows. This protein specifically catalyzes the removal of signal peptides from prolipoproteins. This Latilactobacillus sakei subsp. sakei (strain 23K) (Lactobacillus sakei subsp. sakei) protein is Lipoprotein signal peptidase.